We begin with the raw amino-acid sequence, 187 residues long: Urease accessory protein UreE (187 aa).

A disordered region spans residues Arg-154–His-187. Residues Gly-162 to His-177 show a composition bias toward basic residues. Basic and acidic residues predominate over residues His-178–His-187.

It belongs to the UreE family.

It localises to the cytoplasm. Its function is as follows. Involved in urease metallocenter assembly. Binds nickel. Probably functions as a nickel donor during metallocenter assembly. The polypeptide is Urease accessory protein UreE (Actinobacillus pleuropneumoniae (Haemophilus pleuropneumoniae)).